A 542-amino-acid polypeptide reads, in one-letter code: Chloride channel CLIC-like protein 1 (542 aa).

A signal peptide spans 1-18 (MLYSLLLCECLWLITAYA). Residues 19–184 (HDDEWIDPTD…EEFFGVDPYN (166 aa)) are Lumenal-facing. Residues 185–205 (VFMVLLCLLCIVALVATELWT) form a helical membrane-spanning segment. At 206 to 216 (YVRWYTQLKRV) the chain is on the cytoplasmic side. A helical membrane pass occupies residues 217 to 237 (FFISFLISLGWNWMYLYKLAF). Over 238–329 (AQHQAEVAKM…GEFIKALMKE (92 aa)) the chain is Lumenal. Residues 330 to 350 (IPVLLHIPVLIIMALAVLSFC) form a helical membrane-spanning segment. Residues 351–542 (YGAGKSVNML…PASTAVEVCG (192 aa)) are Cytoplasmic-facing. The interval 369–394 (EAPQALQAGERRRQQKIDYRPHGGAG) is disordered. The span at 377–389 (GERRRQQKIDYRP) shows a compositional bias: basic and acidic residues. A phosphoserine mark is found at Ser438 and Ser464. The segment at 452-542 (AREHPKVVPG…PASTAVEVCG (91 aa)) is disordered. Positions 480–491 (ESTPTESSTESS) are enriched in low complexity. Residue Thr482 is modified to Phosphothreonine. Ser532 bears the Phosphoserine mark.

This sequence belongs to the chloride channel MCLC family. As to quaternary structure, homomultimers. Interacts with mitochondrial protein PIGBOS1 (via C-terminus); the interaction occurs at the mitochondria-associated endoplasmic reticulum (ER) membrane, a zone of contact between the ER and mitochondrial membranes, but does not appear to play a role in ER-mitochondria tethering and is not affected by ER stress. Interacts with CALR.

It is found in the endoplasmic reticulum membrane. It catalyses the reaction chloride(in) = chloride(out). It carries out the reaction bromide(in) = bromide(out). The enzyme catalyses nitrate(in) = nitrate(out). The catalysed reaction is fluoride(in) = fluoride(out). Anion-selective channel with Ca(2+)-dependent and voltage-independent gating. Permeable to small monovalent anions with selectivity for bromide &gt; chloride &gt; nitrate &gt; fluoride. Operates in the endoplasmic reticulum (ER) membrane where it mediates chloride efflux to compensate for the loss of positive charges from the ER lumen upon Ca(2+) release. Contributes to the maintenance of ER Ca(2+) pools and activation of unfolded protein response to prevent accumulation of misfolded proteins in the ER lumen. Particularly involved in ER homeostasis mechanisms underlying motor neurons and retinal photoreceptors survival. The chain is Chloride channel CLIC-like protein 1 (CLCC1) from Bos taurus (Bovine).